The sequence spans 354 residues: Fructose-bisphosphate aldolase (354 aa).

Ser61 is a D-glyceraldehyde 3-phosphate binding site. Asp104 serves as the catalytic Proton donor. Zn(2+) contacts are provided by His105, Asp139, Glu169, and His221. Gly222 is a binding site for dihydroxyacetone phosphate. His260 is a binding site for Zn(2+). Dihydroxyacetone phosphate-binding positions include 261–263 and 282–285; these read GGS and NIDT.

The protein belongs to the class II fructose-bisphosphate aldolase family. In terms of assembly, homodimer. Zn(2+) is required as a cofactor.

The catalysed reaction is beta-D-fructose 1,6-bisphosphate = D-glyceraldehyde 3-phosphate + dihydroxyacetone phosphate. It functions in the pathway carbohydrate degradation; glycolysis; D-glyceraldehyde 3-phosphate and glycerone phosphate from D-glucose: step 4/4. Its function is as follows. Catalyzes the aldol condensation of dihydroxyacetone phosphate (DHAP or glycerone-phosphate) with glyceraldehyde 3-phosphate (G3P) to form fructose 1,6-bisphosphate (FBP) in gluconeogenesis and the reverse reaction in glycolysis. This is Fructose-bisphosphate aldolase (fba) from Campylobacter jejuni subsp. jejuni serotype O:23/36 (strain 81-176).